We begin with the raw amino-acid sequence, 672 residues long: NADPH-Fe(3+) oxidoreductase subunit beta (672 aa).

Residues cysteine 203, cysteine 207, cysteine 211, and cysteine 215 each contribute to the [4Fe-4S] cluster site. 254–283 serves as a coordination point for FAD; it reads KKVAIVGAGPAGLACAYYLALEGYPCTIYE. 388–421 contributes to the NADP(+) binding site; that stretch reads GKKVVVVGGGNTAIDCVRVALREGAEESTLLYRR. An FAD-binding site is contributed by 552 to 562; it reads TDLEGVFAGGD.

In terms of assembly, heterotetramer with 2 alpha subunits. The cofactor is [4Fe-4S] cluster. FAD serves as cofactor.

The protein localises to the cell membrane. Probably involved in acetate metabolism and not in the reduction of Fe(3+) chelates. May serve as a major route for NADP regeneration. The polypeptide is NADPH-Fe(3+) oxidoreductase subunit beta (sfrB) (Geobacter sulfurreducens (strain DL-1 / KN400)).